The primary structure comprises 206 residues: Thymidylate kinase (206 aa).

11-18 (GIDGAGKT) is an ATP binding site.

Belongs to the thymidylate kinase family.

The catalysed reaction is dTMP + ATP = dTDP + ADP. In terms of biological role, phosphorylation of dTMP to form dTDP in both de novo and salvage pathways of dTTP synthesis. This Burkholderia pseudomallei (strain 1106a) protein is Thymidylate kinase.